The sequence spans 216 residues: Large ribosomal subunit protein uL1A (216 aa).

A phosphoserine mark is found at S85 and S128.

Belongs to the universal ribosomal protein uL1 family. Component of the large ribosomal subunit (LSU). Mature yeast ribosomes consist of a small (40S) and a large (60S) subunit. The 40S small subunit contains 1 molecule of ribosomal RNA (18S rRNA) and at least 33 different proteins. The large 60S subunit contains 3 rRNA molecules (25S, 5.8S and 5S rRNA) and at least 46 different proteins. uL1 forms part of the L1 stalk.

Its subcellular location is the cytoplasm. Functionally, component of the ribosome, a large ribonucleoprotein complex responsible for the synthesis of proteins in the cell. The small ribosomal subunit (SSU) binds messenger RNAs (mRNAs) and translates the encoded message by selecting cognate aminoacyl-transfer RNA (tRNA) molecules. The large subunit (LSU) contains the ribosomal catalytic site termed the peptidyl transferase center (PTC), which catalyzes the formation of peptide bonds, thereby polymerizing the amino acids delivered by tRNAs into a polypeptide chain. The nascent polypeptides leave the ribosome through a tunnel in the LSU and interact with protein factors that function in enzymatic processing, targeting, and the membrane insertion of nascent chains at the exit of the ribosomal tunnel. uL1 forms part of the L1 stalk, a mobile element that plays a role in evacuating the exit-site tRNA. This Schizosaccharomyces pombe (strain 972 / ATCC 24843) (Fission yeast) protein is Large ribosomal subunit protein uL1A (rpl102).